The following is a 398-amino-acid chain: Argininosuccinate synthase (398 aa).

Position 8–16 (8–16 (AYSGGLDTT)) interacts with ATP. Tyrosine 87 contributes to the L-citrulline binding site. Glycine 117 contacts ATP. Residues threonine 119, asparagine 123, and aspartate 124 each coordinate L-aspartate. L-citrulline is bound at residue asparagine 123. Arginine 127, serine 175, glutamate 259, and tyrosine 271 together coordinate L-citrulline.

Belongs to the argininosuccinate synthase family. Type 1 subfamily. Homotetramer.

It is found in the cytoplasm. The catalysed reaction is L-citrulline + L-aspartate + ATP = 2-(N(omega)-L-arginino)succinate + AMP + diphosphate + H(+). The protein operates within amino-acid biosynthesis; L-arginine biosynthesis; L-arginine from L-ornithine and carbamoyl phosphate: step 2/3. This chain is Argininosuccinate synthase, found in Corynebacterium jeikeium (strain K411).